The chain runs to 543 residues: CTP synthase (543 aa).

The tract at residues 1–265 is amidoligase domain; that stretch reads MTRYIFVTGG…DDYVVERFGL (265 aa). Ser13 serves as a coordination point for CTP. Position 13 (Ser13) interacts with UTP. ATP-binding positions include 14–19 and Asp71; that span reads SLGKGI. Mg(2+) is bound by residues Asp71 and Glu139. CTP contacts are provided by residues 146 to 148, 186 to 191, and Lys222; these read DIE and KTKPTQ. Residues 186 to 191 and Lys222 each bind UTP; that span reads KTKPTQ. The 252-residue stretch at 290–541 folds into the Glutamine amidotransferase type-1 domain; it reads NIAMVGKYME…VNAALEYKAK (252 aa). An L-glutamine-binding site is contributed by Gly351. Cys378 serves as the catalytic Nucleophile; for glutamine hydrolysis. L-glutamine is bound by residues 379–382, Glu402, and Arg469; that span reads LGMQ. Active-site residues include His514 and Glu516.

Belongs to the CTP synthase family. As to quaternary structure, homotetramer.

It catalyses the reaction UTP + L-glutamine + ATP + H2O = CTP + L-glutamate + ADP + phosphate + 2 H(+). It carries out the reaction L-glutamine + H2O = L-glutamate + NH4(+). The catalysed reaction is UTP + NH4(+) + ATP = CTP + ADP + phosphate + 2 H(+). Its pathway is pyrimidine metabolism; CTP biosynthesis via de novo pathway; CTP from UDP: step 2/2. With respect to regulation, allosterically activated by GTP, when glutamine is the substrate; GTP has no effect on the reaction when ammonia is the substrate. The allosteric effector GTP functions by stabilizing the protein conformation that binds the tetrahedral intermediate(s) formed during glutamine hydrolysis. Inhibited by the product CTP, via allosteric rather than competitive inhibition. Its function is as follows. Catalyzes the ATP-dependent amination of UTP to CTP with either L-glutamine or ammonia as the source of nitrogen. Regulates intracellular CTP levels through interactions with the four ribonucleotide triphosphates. This is CTP synthase from Stutzerimonas stutzeri (strain A1501) (Pseudomonas stutzeri).